The following is a 400-amino-acid chain: Formate-dependent phosphoribosylglycinamide formyltransferase (400 aa).

N(1)-(5-phospho-beta-D-ribosyl)glycinamide-binding positions include 22-23 (EL) and Glu82. ATP contacts are provided by residues Arg115, Lys156, 161-166 (SSGKGQ), 196-199 (EGFI), and Glu204. In terms of domain architecture, ATP-grasp spans 120–309 (RLAAETLGLP…EFALHARAIL (190 aa)). The Mg(2+) site is built by Glu268 and Glu280. N(1)-(5-phospho-beta-D-ribosyl)glycinamide is bound by residues Asp287, Lys361, and 368 to 369 (RR).

This sequence belongs to the PurK/PurT family. As to quaternary structure, homodimer.

The catalysed reaction is N(1)-(5-phospho-beta-D-ribosyl)glycinamide + formate + ATP = N(2)-formyl-N(1)-(5-phospho-beta-D-ribosyl)glycinamide + ADP + phosphate + H(+). It functions in the pathway purine metabolism; IMP biosynthesis via de novo pathway; N(2)-formyl-N(1)-(5-phospho-D-ribosyl)glycinamide from N(1)-(5-phospho-D-ribosyl)glycinamide (formate route): step 1/1. Its function is as follows. Involved in the de novo purine biosynthesis. Catalyzes the transfer of formate to 5-phospho-ribosyl-glycinamide (GAR), producing 5-phospho-ribosyl-N-formylglycinamide (FGAR). Formate is provided by PurU via hydrolysis of 10-formyl-tetrahydrofolate. This is Formate-dependent phosphoribosylglycinamide formyltransferase from Xanthomonas campestris pv. campestris (strain 8004).